The following is a 1070-amino-acid chain: DNA-directed RNA polymerase subunit beta (1070 aa).

Belongs to the RNA polymerase beta chain family. In plastids the minimal PEP RNA polymerase catalytic core is composed of four subunits: alpha, beta, beta', and beta''. When a (nuclear-encoded) sigma factor is associated with the core the holoenzyme is formed, which can initiate transcription.

It localises to the plastid. The protein localises to the chloroplast. The catalysed reaction is RNA(n) + a ribonucleoside 5'-triphosphate = RNA(n+1) + diphosphate. Functionally, DNA-dependent RNA polymerase catalyzes the transcription of DNA into RNA using the four ribonucleoside triphosphates as substrates. The polypeptide is DNA-directed RNA polymerase subunit beta (Daucus carota (Wild carrot)).